We begin with the raw amino-acid sequence, 229 residues long: 2,3-bisphosphoglycerate-dependent phosphoglycerate mutase (229 aa).

Substrate is bound by residues 7–14 (RHGQSEWN), 20–21 (TG), Arg-59, 86–89 (ERHY), Lys-97, 113–114 (RR), and 182–183 (GN). The Tele-phosphohistidine intermediate role is filled by His-8. The Proton donor/acceptor role is filled by Glu-86.

This sequence belongs to the phosphoglycerate mutase family. BPG-dependent PGAM subfamily.

The catalysed reaction is (2R)-2-phosphoglycerate = (2R)-3-phosphoglycerate. The protein operates within carbohydrate degradation; glycolysis; pyruvate from D-glyceraldehyde 3-phosphate: step 3/5. In terms of biological role, catalyzes the interconversion of 2-phosphoglycerate and 3-phosphoglycerate. This is 2,3-bisphosphoglycerate-dependent phosphoglycerate mutase from Listeria monocytogenes serotype 4b (strain F2365).